Here is a 137-residue protein sequence, read N- to C-terminus: Peptide methionine sulfoxide reductase MsrB (137 aa).

The 123-residue stretch at 7-129 (PEELKNGLSE…NSASLSFTDE (123 aa)) folds into the MsrB domain. 4 residues coordinate Zn(2+): cysteine 46, cysteine 49, cysteine 95, and cysteine 98. Catalysis depends on cysteine 118, which acts as the Nucleophile.

Belongs to the MsrB Met sulfoxide reductase family. Requires Zn(2+) as cofactor.

It carries out the reaction L-methionyl-[protein] + [thioredoxin]-disulfide + H2O = L-methionyl-(R)-S-oxide-[protein] + [thioredoxin]-dithiol. The sequence is that of Peptide methionine sulfoxide reductase MsrB from Klebsiella pneumoniae subsp. pneumoniae (strain ATCC 700721 / MGH 78578).